The primary structure comprises 197 residues: Recombination protein RecR (197 aa).

The C4-type zinc-finger motif lies at 57 to 72 (CSVCFAITEDDPCWIC). In terms of domain architecture, Toprim spans 79-174 (GTICVVEEPQ…KVTRLAHGIP (96 aa)).

It belongs to the RecR family.

Functionally, may play a role in DNA repair. It seems to be involved in an RecBC-independent recombinational process of DNA repair. It may act with RecF and RecO. The protein is Recombination protein RecR of Geobacter sp. (strain M21).